The primary structure comprises 130 residues: Small ribosomal subunit protein uS8 (130 aa).

Belongs to the universal ribosomal protein uS8 family. In terms of assembly, part of the 30S ribosomal subunit. Contacts proteins S5 and S12.

One of the primary rRNA binding proteins, it binds directly to 16S rRNA central domain where it helps coordinate assembly of the platform of the 30S subunit. In Shewanella denitrificans (strain OS217 / ATCC BAA-1090 / DSM 15013), this protein is Small ribosomal subunit protein uS8.